The chain runs to 235 residues: Glial cell line-derived neurotrophic factor (235 aa).

An N-terminal signal peptide occupies residues 1-19 (MKLWDILATCLLLLSSVST). Residues 20-87 (RPLFHKLQPS…DFIEATLGRL (68 aa)) constitute a propeptide that is removed on maturation. Disordered regions lie at residues 34 to 60 (VRSE…ASME) and 91 to 137 (SDVE…RVKG). A compositionally biased stretch (basic residues) spans 119–128 (GERKRSRGRA). 3 cysteine pairs are disulfide-bonded: Cys142-Cys203, Cys169-Cys232, and Cys173-Cys234. N-linked (GlcNAc...) asparagine glycosylation is found at Asn150 and Asn186.

This sequence belongs to the TGF-beta family. GDNF subfamily. As to quaternary structure, homodimer; disulfide-linked. Interacts with GFRA1 coreceptor and RET: forms a 2:2:2 ternary complex composed of GDNF ligand, GFRA1 and RET receptor. First expressed at 14 hours post-fertilization (hpf) in the ventral half of anterior somites and in intermediate mesoderm. Ventral somitic expression persists and extends more posteriorly over the next 12 hours. Expressed throughout the ventral trunk mesoderm and endoderm at 24 hpf. By 30 hpf, somitic expression ceases and by 36 hpf, expression becomes restricted to the endodermal cells forming the gut, with expression along the whole length of the developing gut tube at 72 hpf.

It localises to the secreted. Neurotrophic factor that enhances survival and morphological differentiation of dopaminergic neurons and increases their high-affinity dopamine uptake. Acts by binding to its coreceptor, GFRA1, leading to autophosphorylation and activation of the RET receptor. This Danio rerio (Zebrafish) protein is Glial cell line-derived neurotrophic factor.